The primary structure comprises 1437 residues: CRISPR-associated endoribonuclease Cas13a (1437 aa).

HEPN-like fold stretches follow at residues 460–626 (LNAS…AMFE) and 1101–1437 (EFRD…QLKN). The tract at residues 1377–1419 (EVKEKKKPSDNNTGKGYSKRDRQQDRKEYDKYKEKKKKEGNFL) is disordered. Residues 1394–1416 (SKRDRQQDRKEYDKYKEKKKKEG) show a composition bias toward basic and acidic residues.

This sequence belongs to the CRISPR-associated endoribonuclease Cas13a family. A divalent metal cation is required as a cofactor.

Its activity is regulated as follows. Target RNA acts as an activator for non-specific ssRNA degradation. CRISPR (clustered regularly interspaced short palindromic repeat), is an adaptive immune system that provides protection against mobile genetic elements (viruses, transposable elements and conjugative plasmids). CRISPR clusters contain sequences complementary to antecedent mobile elements and target invading nucleic acids. Unlike many single-component effectors, this CRISPR-Cas system targets RNA. CRISPR clusters are transcribed from pre-CRISPR RNA (crRNA) and processed into crRNA by this protein. Cleaves linear target ssRNA in a pre-crRNA-dependent fashion, preferentially around A residues. Binding a viable target RNA target activates this protein for non-specific RNA degradation in vitro (called collateral RNA degradation), but it is not very sensitive as it requires nanomolar levels of viable target RNA. This is CRISPR-associated endoribonuclease Cas13a from Lachnospiraceae bacterium (strain NK4A179).